Here is a 310-residue protein sequence, read N- to C-terminus: MMTDSAPPEPIHAEIPEGWLHKAKTLSEALPYMRRFAGLTIVIKYGGHAMGDPELAKTFARDVVLLKQVGMNPVVVHGGGPQIGRMLDTLRIQSTFIDGLRVTDAATVDVVEMVLAGSINKAIVTEINQAGGCAVGLSGKDGRLIQARKMVRKRHDPESNIERVLDLGFVGEPVVIDPHVLIQFRDSDIIPVIAPIGIGEAGETFNINADTAAGALAAQMKAARLLMLTDVKGVLDKDKQLIQELSVDRARLLKQEGTISGGMIPKVETCIDAVERGVEAAVIVDGRVPHAVLLEIFTPRGAGTLIRASR.

Substrate contacts are provided by residues 79-80 (GG), Arg-101, and Asn-206.

The protein belongs to the acetylglutamate kinase family. ArgB subfamily.

The protein resides in the cytoplasm. The catalysed reaction is N-acetyl-L-glutamate + ATP = N-acetyl-L-glutamyl 5-phosphate + ADP. It participates in amino-acid biosynthesis; L-arginine biosynthesis; N(2)-acetyl-L-ornithine from L-glutamate: step 2/4. In terms of biological role, catalyzes the ATP-dependent phosphorylation of N-acetyl-L-glutamate. The chain is Acetylglutamate kinase from Rhodospirillum rubrum (strain ATCC 11170 / ATH 1.1.1 / DSM 467 / LMG 4362 / NCIMB 8255 / S1).